The primary structure comprises 681 residues: Threonine--tRNA ligase (681 aa).

The TGS domain maps to Lys-3 to Thr-97. Residues Asp-279–Pro-576 are catalytic. Cys-372, His-423, and His-553 together coordinate Zn(2+).

The protein belongs to the class-II aminoacyl-tRNA synthetase family. Homodimer. The cofactor is Zn(2+).

The protein localises to the cytoplasm. The enzyme catalyses tRNA(Thr) + L-threonine + ATP = L-threonyl-tRNA(Thr) + AMP + diphosphate + H(+). Catalyzes the attachment of threonine to tRNA(Thr) in a two-step reaction: L-threonine is first activated by ATP to form Thr-AMP and then transferred to the acceptor end of tRNA(Thr). Also edits incorrectly charged L-seryl-tRNA(Thr). The sequence is that of Threonine--tRNA ligase from Acidobacterium capsulatum (strain ATCC 51196 / DSM 11244 / BCRC 80197 / JCM 7670 / NBRC 15755 / NCIMB 13165 / 161).